Reading from the N-terminus, the 494-residue chain is Anthranilate synthase component 1 (494 aa).

Residues Ser50 and 276–278 (PYM) contribute to the L-tryptophan site. 311-312 (GT) lines the chorismate pocket. Mg(2+) is bound at residue Glu338. Residues Tyr426, Arg446, 460–462 (GAG), and Gly462 contribute to the chorismate site. Glu475 lines the Mg(2+) pocket.

Belongs to the anthranilate synthase component I family. Heterotetramer consisting of two non-identical subunits: a beta subunit (TrpG) and a large alpha subunit (TrpE). Mg(2+) serves as cofactor.

The catalysed reaction is chorismate + L-glutamine = anthranilate + pyruvate + L-glutamate + H(+). The protein operates within amino-acid biosynthesis; L-tryptophan biosynthesis; L-tryptophan from chorismate: step 1/5. With respect to regulation, feedback inhibited by tryptophan. In terms of biological role, part of a heterotetrameric complex that catalyzes the two-step biosynthesis of anthranilate, an intermediate in the biosynthesis of L-tryptophan. In the first step, the glutamine-binding beta subunit (TrpG) of anthranilate synthase (AS) provides the glutamine amidotransferase activity which generates ammonia as a substrate that, along with chorismate, is used in the second step, catalyzed by the large alpha subunit of AS (TrpE) to produce anthranilate. In the absence of TrpG, TrpE can synthesize anthranilate directly from chorismate and high concentrations of ammonia. The sequence is that of Anthranilate synthase component 1 (trpE) from Acetivibrio thermocellus (Hungateiclostridium thermocellum).